Reading from the N-terminus, the 491-residue chain is Blue-light-activated histidine kinase (491 aa).

Positions 19–92 constitute a PAS 1 domain; sequence EANPFTAAVE…EIIHSALEAE (74 aa). The residue at position 69 (cysteine 69) is an S-4a-FMN cysteine. The PAC domain maps to 93-147; sequence QSVEIDILNYKKSGEPFWNRLHISPVKTENGELHHFVSSQLDVTLELGKLVELEK. One can recognise a PAS 2 domain in the interval 159–230; sequence SSDQLQYIVE…QRSQESFATG (72 aa). The segment at 286 to 368 is HWE histidine kinase domain; the sequence is EISHRFKNSM…GHRIRTSGPE (83 aa). Histidine 289 bears the Phosphohistidine; by autocatalysis mark.

In terms of processing, FMN binds covalently to cysteine after exposure to blue light and this bond is spontaneously broken in the dark.

The catalysed reaction is ATP + protein L-histidine = ADP + protein N-phospho-L-histidine.. In terms of biological role, photosensitive kinase that is involved in increased bacterial virulence upon exposure to light. The chain is Blue-light-activated histidine kinase from Brucella anthropi (strain ATCC 49188 / DSM 6882 / CCUG 24695 / JCM 21032 / LMG 3331 / NBRC 15819 / NCTC 12168 / Alc 37) (Ochrobactrum anthropi).